The sequence spans 568 residues: Zinc finger protein 768 (568 aa).

The segment covering methionine 1–histidine 16 has biased composition (basic and acidic residues). 3 disordered regions span residues methionine 1 to valine 223, serine 228 to proline 247, and leucine 264 to arginine 287. A phosphoserine mark is found at serine 17, serine 23, and serine 27. Threonine 35 is subject to Phosphothreonine. Phosphoserine occurs at positions 36, 65, 72, 79, 86, 93, 100, 107, 114, 121, 128, 135, and 149. Low complexity predominate over residues glutamate 62–proline 80. A compositionally biased stretch (polar residues) spans serine 110–proline 122. Tyrosine 152 is modified (phosphotyrosine). The residue at position 154 (serine 154) is a Phosphoserine. Positions phenylalanine 159 to glutamate 186 are enriched in polar residues. Phosphothreonine is present on threonine 189. A Phosphoserine modification is found at serine 191. A C2H2-type 1 zinc finger spans residues asparagine 289–histidine 311. At threonine 312 the chain carries Phosphothreonine. Tyrosine 317 is subject to Phosphotyrosine. C2H2-type zinc fingers lie at residues tyrosine 317–histidine 339, tyrosine 345–histidine 367, tyrosine 373–histidine 395, and tyrosine 401–histidine 423. Phosphoserine occurs at positions 323 and 327. At threonine 424 the chain carries Phosphothreonine. 5 C2H2-type zinc fingers span residues phenylalanine 429–histidine 451, phenylalanine 457–histidine 479, tyrosine 485–histidine 507, tyrosine 513–histidine 535, and tyrosine 541–histidine 563. A Phosphoserine modification is found at serine 470.

It belongs to the krueppel C2H2-type zinc-finger protein family. As to quaternary structure, interacts (via zinc-finger domains) with TP53 (via N-terminus); interaction might be facilitated by TP53 oligomerization state. Interacts with ELP3. May be phosphorylated at residue 'Ser-5' of the tandem heptapeptide repeats in the N-terminus. Phosphorylation might be increased upon RAS pathway activation and negatively regulate protein stability.

The protein resides in the nucleus. Its subcellular location is the chromosome. Functionally, binds to mammalian-wide interspersed repeat (MIRs) sequences in euchromatin and promoter regions of genes at the consensus sequence 5'-GCTGTGTG-[N20]-CCTCTCTG-3', consisting of two anchor regions connected by a linker region; the linker region probably does not contribute to the binding specificity. Required for cell homeostasis. May be involved in transcriptional regulation. This chain is Zinc finger protein 768 (Znf768), found in Mus musculus (Mouse).